Consider the following 89-residue polypeptide: Cell division topological specificity factor (89 aa).

This sequence belongs to the MinE family.

Its function is as follows. Prevents the cell division inhibition by proteins MinC and MinD at internal division sites while permitting inhibition at polar sites. This ensures cell division at the proper site by restricting the formation of a division septum at the midpoint of the long axis of the cell. The polypeptide is Cell division topological specificity factor (Pectobacterium carotovorum subsp. carotovorum (strain PC1)).